The sequence spans 132 residues: Gamma-crystallin-5 (132 aa).

Residues 1–40 enclose the Beta/gamma crystallin 'Greek key' 2 domain; it reads ILYEQPSYRGHQYYLWKGEYPDFQRWMGFNDSIRSCRMSP. A connecting peptide region spans residues 41 to 45; the sequence is YHQGQ. 2 consecutive Beta/gamma crystallin 'Greek key' domains span residues 46 to 86 and 87 to 129; these read YKMR…NVFD and GNWM…RRVH.

The protein belongs to the beta/gamma-crystallin family. Monomer.

Its function is as follows. Crystallins are the dominant structural components of the vertebrate eye lens. The protein is Gamma-crystallin-5 (cryg5) of Xenopus laevis (African clawed frog).